Here is a 352-residue protein sequence, read N- to C-terminus: Thiosulfate transporter TsuA (352 aa).

Residues 1–21 (MFSMILSGLICGALLGFVMQR) form a helical membrane-spanning segment. The Cytoplasmic portion of the chain corresponds to 22 to 44 (GRFCLTGGFRDMYIVKNNRMFYA). A helical membrane pass occupies residues 45–65 (LLIAISVQSVGVFALIQAGLL). The Periplasmic portion of the chain corresponds to 66–70 (TYEAG). A helical membrane pass occupies residues 71–91 (AFPWLGTVIGGYIFGLGIVLA). Residues 92 to 102 (GGCATGTWYRA) are Cytoplasmic-facing. The helical transmembrane segment at 103–123 (GEGLIGSWIALFTYMVMSAVM) threads the bilayer. Over 124 to 148 (RSPHASGLNQTLQHYSTEHNSIAET) the chain is Periplasmic. A helical membrane pass occupies residues 149 to 169 (FNLSVWPLVAVLLVITLWVVM). Over 170–197 (KELKKPKLKVATLPPRRTGIAHILFEKR) the chain is Cytoplasmic. A helical membrane pass occupies residues 198-218 (WHPFVTAVLIGLIALLAWPLS). Topologically, residues 219–247 (EATGRMFGLGITSPTANILQFLVAGDMKY) are periplasmic. Residues 248-268 (INWGVFLVLGIFVGSFIAAKA) form a helical membrane-spanning segment. The Cytoplasmic portion of the chain corresponds to 269–289 (SREFRVRAADAQTTLRSGLGG). The chain crosses the membrane as a helical span at residues 290–310 (VLMGFGASIAGGCSIGNGLVM). At 311 to 317 (TAMMTWQ) the chain is on the periplasmic side. The helical transmembrane segment at 318-338 (GWIGLVFMILGVWTASWLVYV) threads the bilayer. At 339–352 (RPQRKARLATAAAN) the chain is on the cytoplasmic side.

It belongs to the TsuA/YedE (TC 9.B.102) family.

It is found in the cell inner membrane. The catalysed reaction is thiosulfate(in) = thiosulfate(out). Mediates thiosulfate uptake. This is Thiosulfate transporter TsuA from Escherichia coli (strain K12).